The primary structure comprises 644 residues: 3-isopropylmalate dehydratase (644 aa).

[4Fe-4S] cluster contacts are provided by cysteine 400, cysteine 460, and cysteine 463. Residues 521 to 568 (SEIPGTPKQSPRQEVVAEFESEEDDVDSSSVDSAPVATPPSTGDSAGM) form a disordered region. Over residues 537–547 (AEFESEEDDVD) the composition is skewed to acidic residues.

It belongs to the aconitase/IPM isomerase family. As to quaternary structure, monomer. [4Fe-4S] cluster serves as cofactor.

The catalysed reaction is (2R,3S)-3-isopropylmalate = (2S)-2-isopropylmalate. It participates in amino-acid biosynthesis; L-leucine biosynthesis; L-leucine from 3-methyl-2-oxobutanoate: step 2/4. In terms of biological role, catalyzes the isomerization between 2-isopropylmalate and 3-isopropylmalate, via the formation of 2-isopropylmaleate. In Mucor circinelloides f. lusitanicus (Mucor racemosus var. lusitanicus), this protein is 3-isopropylmalate dehydratase (LEUA).